The chain runs to 874 residues: Alanine--tRNA ligase (874 aa).

4 residues coordinate Zn(2+): histidine 564, histidine 568, cysteine 665, and histidine 669.

It belongs to the class-II aminoacyl-tRNA synthetase family. It depends on Zn(2+) as a cofactor.

The protein resides in the cytoplasm. The catalysed reaction is tRNA(Ala) + L-alanine + ATP = L-alanyl-tRNA(Ala) + AMP + diphosphate. In terms of biological role, catalyzes the attachment of alanine to tRNA(Ala) in a two-step reaction: alanine is first activated by ATP to form Ala-AMP and then transferred to the acceptor end of tRNA(Ala). Also edits incorrectly charged Ser-tRNA(Ala) and Gly-tRNA(Ala) via its editing domain. This Burkholderia cenocepacia (strain HI2424) protein is Alanine--tRNA ligase.